A 2646-amino-acid polypeptide reads, in one-letter code: Probable inactive serine/threonine-protein kinase roco10 (2646 aa).

Disordered regions lie at residues 28 to 122 (LNYS…LSGG), 138 to 168 (NIPI…KDKD), 205 to 248 (PLFI…VSPS), 281 to 457 (QQQR…VKQA), 477 to 516 (MSKL…HTSP), 605 to 656 (TSPN…PHQY), and 882 to 907 (QSSS…STPS). The span at 46–56 (PQQNLLENDTL) shows a compositional bias: polar residues. 3 stretches are compositionally biased toward low complexity: residues 78–115 (IITT…TSPS), 147–161 (SPTS…NNNN), and 215–228 (SRNN…GGNK). Residues 235–248 (KISSTSAAGDVSPS) show a composition bias toward polar residues. Composition is skewed to low complexity over residues 285–297 (NGNN…NNNN) and 325–334 (NNNNNNNNNN). Positions 335 to 345 (KQPQHPMNGNH) are enriched in polar residues. A compositionally biased stretch (low complexity) spans 346 to 394 (SPSNGTSGSLSMSGSGIDNGGNNNNNSNTHGSSSNQSSGVTSPIIQSTS). Polar residues-rich tracts occupy residues 402–416 (GLNS…SSPT) and 428–443 (TSAS…PLMN). 5 stretches are compositionally biased toward low complexity: residues 444-454 (STGVSSSSSGV), 491-516 (PSSP…HTSP), 605-627 (TSPN…NSSP), 634-651 (QQQQ…NTNT), and 883-907 (SSSS…STPS). One can recognise a Rho-GAP domain in the interval 585 to 807 (SSISPISTAA…MFIQQADILF (223 aa)). LRR repeat units follow at residues 968–987 (QKLD…IKQL), 989–1011 (DLQE…ARLT), 1012–1033 (SLRT…MADF), 1040–1061 (NLEN…YTWL), 1062–1083 (KLKT…IFQI), 1085–1108 (TLEV…CTST), 1109–1131 (KLRS…INLV), 1132–1154 (ELQV…QKLT), 1155–1176 (SLTE…LLLL), 1178–1199 (NLKK…IHRM), 1201–1222 (SLIE…IVAL), 1224–1247 (KLNS…YIQK), 1248–1270 (GKEG…YRTR), 1271–1298 (IIML…SFSS), and 1303–1327 (LPSL…ILDI). Positions 1262 to 1474 (TNVPCYRTRI…RDIKQMIAKN (213 aa)) constitute a Roc domain. Disordered stretches follow at residues 1293–1317 (KSSF…SNNS), 1651–1670 (NNNN…SRSM), and 1957–2026 (NNSS…KEKE). The span at 1651 to 1669 (NNNNSNGNNVGRGRSGSRS) shows a compositional bias: low complexity. Polar residues predominate over residues 1966–1975 (PIASSRSNPK). Positions 1983–1996 (NLIQSNNNDNNNSL) are enriched in low complexity. Residues 1997–2026 (SKKDLKELAKQNKEKEKEKEKDKDKEKEKE) are compositionally biased toward basic and acidic residues. The Protein kinase domain occupies 2049-2342 (FSICHFIKEI…PSKIISQLYT (294 aa)). ATP is bound by residues 2055-2063 (IKEIDYREI) and K2094. Residues 2412 to 2536 (MVVLNNKQST…FTVPTTNKNG (125 aa)) form the RGS domain.

This sequence belongs to the protein kinase superfamily. TKL Ser/Thr protein kinase family. ROCO subfamily.

The sequence is that of Probable inactive serine/threonine-protein kinase roco10 (roco10) from Dictyostelium discoideum (Social amoeba).